Reading from the N-terminus, the 552-residue chain is Steroid transmembrane transporter SLC22A24 (552 aa).

A run of 12 helical transmembrane segments spans residues 16–36 (FQILQTAFFCICILIAYPHML), 144–164 (LISVAQSLFMVAQLLGGLIFG), 178–198 (CCLLLFAISGTCAAIAPTFPV), 204–224 (FLGGICLMNIITNAVSTMSEW), 235–255 (GIILNSCNIGQILMGGLGFVI), 267–287 (IPLFILFLFSRSVLESAQWLI), 350–370 (IFYLSFVRFAATIPFLGLMLN), 378–398 (IFLFQIIFGAVTFIVRCAVLL), 407–427 (ISQMVSSFLVGIPILVNIFLS), 435–455 (VALATLGIGATTAIFTTHTVH), 469–489 (IGLNAMFSRLGATLAPLLMIL), and 496–516 (LPWIIYGVSSILAGLVVLLLP). Positions 524–552 (PNTIQDVENNRRDSRKTKQEDISMKVTQF) are disordered. Positions 531–546 (ENNRRDSRKTKQEDIS) are enriched in basic and acidic residues.

This sequence belongs to the major facilitator (TC 2.A.1) superfamily. Organic cation transporter (TC 2.A.1.19) family.

It is found in the cell membrane. It catalyses the reaction estrone 3-sulfate(out) + glutarate(in) = estrone 3-sulfate(in) + glutarate(out). The enzyme catalyses 17beta-estradiol 17-O-(beta-D-glucuronate)(out) + glutarate(in) = 17beta-estradiol 17-O-(beta-D-glucuronate)(in) + glutarate(out). The catalysed reaction is taurocholate(out) + glutarate(in) = taurocholate(in) + glutarate(out). It carries out the reaction glycocholate(out) + glutarate(in) = glycocholate(in) + glutarate(out). It catalyses the reaction dehydroepiandrosterone 3-sulfate(out) + glutarate(in) = dehydroepiandrosterone 3-sulfate(in) + glutarate(out). The enzyme catalyses glutarate(in) + succinate(out) = glutarate(out) + succinate(in). In terms of biological role, renal transmembrane organic anion/dicarboxylate exchanger that participates in the reabsorption of conjugated steroids, as well as bile acids, driven by an outward gradient of dicarboxylates such as glutarate or succinate. Transports taurocholate, estrone 3-sulfate, and estradiol-17-glucuronide (17beta-estradiol 17-O-(beta-D-glucuronate)), but not androstanediol glucuronide (5alpha-androstane-3alpha,17beta-diol 3-O-(beta-D-glucuronate)). This chain is Steroid transmembrane transporter SLC22A24, found in Equus caballus (Horse).